Consider the following 263-residue polypeptide: 4-hydroxy-2-oxo-heptane-1,7-dioate aldolase (263 aa).

The Proton acceptor role is filled by H45. A substrate-binding site is contributed by Q147. E149 serves as a coordination point for a divalent metal cation. A174 and D175 together coordinate substrate. An a divalent metal cation-binding site is contributed by D175.

This sequence belongs to the HpcH/HpaI aldolase family. Homohexamer; trimer of dimers. The cofactor is a divalent metal cation.

The enzyme catalyses 4-hydroxy-2-oxoheptanedioate = succinate semialdehyde + pyruvate. It participates in aromatic compound metabolism; 4-hydroxyphenylacetate degradation; pyruvate and succinate semialdehyde from 4-hydroxyphenylacetate: step 7/7. Functionally, catalyzes the reversible retro-aldol cleavage of 4-hydroxy-2-ketoheptane-1,7-dioate (HKHD) to pyruvate and succinic semialdehyde. This is 4-hydroxy-2-oxo-heptane-1,7-dioate aldolase from Salmonella paratyphi A (strain ATCC 9150 / SARB42).